A 191-amino-acid chain; its full sequence is Small ribosomal subunit protein eS7y (191 aa).

Met1 is modified (N-acetylmethionine). A coiled-coil region spans residues 17 to 50 (TEFEEQVTQALFDLENTNQELKSELKDLYINQAV).

It belongs to the eukaryotic ribosomal protein eS7 family.

The chain is Small ribosomal subunit protein eS7y (RPS7B) from Arabidopsis thaliana (Mouse-ear cress).